The sequence spans 452 residues: Na(+)/H(+) antiporter NhaA (452 aa).

11 helical membrane-spanning segments follow: residues 23–43, 71–91, 108–128, 136–156, 165–185, 189–209, 216–236, 316–336, 349–369, 385–405, and 418–438; these read MMLFLASVLAVIMANSSLSTI, LLQFVNDVLMVIFFLAVGLEI, LPIVGAIGGMIVPVLFFLLVV, GAAIPMSTDIAFALAALAVLG, VFLTALAVADDIGGIIVIALF, HINIGMLAIAFGILFIMYLMG, LGLYFVCTFFVWLFFLQSGIH, IVGYFVLPLFAFANAGITLGG, VFLGLFVGKPLGIYFFTYGFV, LMAVSLFGGIGFTVSLFIATL, and EAKLGIFVASIFAALVGIVTL.

Belongs to the NhaA Na(+)/H(+) (TC 2.A.33) antiporter family.

Its subcellular location is the cell inner membrane. It catalyses the reaction Na(+)(in) + 2 H(+)(out) = Na(+)(out) + 2 H(+)(in). Its function is as follows. Na(+)/H(+) antiporter that extrudes sodium in exchange for external protons. This is Na(+)/H(+) antiporter NhaA from Porphyromonas gingivalis (strain ATCC BAA-308 / W83).